The sequence spans 521 residues: MGRIKSSSGRCSTARLEAVAVLVVVFGVASSSLRGCIAQQSGGGLTRGSFPEGFVFGTASAAYQYEGAVKEDGRGQTIWDTFAHTFGKITDFSNADVAVDQYHRFEEDIQLMADMGMDAYRFSIAWSRIYPNGVGQVNQAGIDHYNKLIDALLAKGIQPYVTLYHWDLPQALEDKYKGWLDRQIVDDFAAYAETCFREFGDRVKHWITLNEPHTVAIQGYDAGLQAPGRCSVLLHLYCKAGNSGTEPYVVAHHFILAHAAAASIYRTKYKATQNGQLGIAFDVMWFEPMSNTTIDIEAAKRAQEFQLGWFADPFFFGDYPATMRARVGERLPRFTADEAAVVKGALDFVGINHYTTYYTRHNNTNIIGTLLNNTLADTGTVSLPFKNGKPIGDRANSIWLYIVPRGMRSLMNYVKERYNSPPVYITENGMDDSNNPFISIKDALKDSKRIKYHNDYLTNLAASIKEDGCDVRGYFAWSLLDNWEWAAGYSSRFGLYFVDYKDNLKRYPKNSVQWFKALLKT.

An N-terminal signal peptide occupies residues 1–38 (MGRIKSSSGRCSTARLEAVAVLVVVFGVASSSLRGCIA). A beta-D-glucoside contacts are provided by residues glutamine 64, histidine 165, and 210–211 (NE). Catalysis depends on glutamate 211, which acts as the Proton donor. Cysteine 230 and cysteine 238 are oxidised to a cystine. Asparagine 291 carries N-linked (GlcNAc...) asparagine glycosylation. Tyrosine 354 is a binding site for a beta-D-glucoside. Residues asparagine 362 and asparagine 372 are each glycosylated (N-linked (GlcNAc...) asparagine). A beta-D-glucoside-binding positions include glutamate 427, tryptophan 477, 484–485 (EW), and phenylalanine 493. The active-site Nucleophile is glutamate 427.

The protein belongs to the glycosyl hydrolase 1 family. Homodimer.

The protein localises to the secreted. It catalyses the reaction Hydrolysis of terminal, non-reducing beta-D-glucosyl residues with release of beta-D-glucose.. In terms of biological role, hydrolyzes glycosides, oligosaccharides and hydrophobic glycosides. Possesses gibberellin ester beta-D-glucosidase activity. Can hydrolyze gibberellin A4 beta-D-glucosyl ester in vitro. In Oryza sativa subsp. japonica (Rice), this protein is Beta-glucosidase 6.